We begin with the raw amino-acid sequence, 239 residues long: Ribonuclease PH (239 aa).

Phosphate-binding positions include Arg86 and 124-126 (GTR).

This sequence belongs to the RNase PH family. Homohexameric ring arranged as a trimer of dimers.

It catalyses the reaction tRNA(n+1) + phosphate = tRNA(n) + a ribonucleoside 5'-diphosphate. Its function is as follows. Phosphorolytic 3'-5' exoribonuclease that plays an important role in tRNA 3'-end maturation. Removes nucleotide residues following the 3'-CCA terminus of tRNAs; can also add nucleotides to the ends of RNA molecules by using nucleoside diphosphates as substrates, but this may not be physiologically important. Probably plays a role in initiation of 16S rRNA degradation (leading to ribosome degradation) during starvation. In Rhizobium johnstonii (strain DSM 114642 / LMG 32736 / 3841) (Rhizobium leguminosarum bv. viciae), this protein is Ribonuclease PH.